Consider the following 349-residue polypeptide: Polyamine aminopropyltransferase 2 (349 aa).

Residues 29-267 form the PABS domain; the sequence is DGAITAIEDS…SSWGFLLASD (239 aa). An S-methyl-5'-thioadenosine-binding site is contributed by Gln60. Spermidine contacts are provided by His91 and Glu115. S-methyl-5'-thioadenosine contacts are provided by residues Asp135 and 167–168; that span reads DG. Asp185 serves as the catalytic Proton acceptor. Residue Pro194 coordinates S-methyl-5'-thioadenosine.

Belongs to the spermidine/spermine synthase family. In terms of assembly, homodimer or homotetramer.

The protein resides in the cytoplasm. It catalyses the reaction S-adenosyl 3-(methylsulfanyl)propylamine + putrescine = S-methyl-5'-thioadenosine + spermidine + H(+). It functions in the pathway amine and polyamine biosynthesis; spermidine biosynthesis; spermidine from putrescine: step 1/1. In terms of biological role, catalyzes the irreversible transfer of a propylamine group from the amino donor S-adenosylmethioninamine (decarboxy-AdoMet) to putrescine (1,4-diaminobutane) to yield spermidine. In Pseudomonas aeruginosa (strain ATCC 15692 / DSM 22644 / CIP 104116 / JCM 14847 / LMG 12228 / 1C / PRS 101 / PAO1), this protein is Polyamine aminopropyltransferase 2.